The primary structure comprises 331 residues: MECSESLELVDKFACGHILSRMFNVVMKHSICDLLEDGPKHYSEISKIIGFKDDSYCYRLMRYFVPRKLFKESVVQVGVFSKTPFSTEFSNNGTLKKLAKFHCNSFHYKLSQVLPETLEIGENQGPSSIGLSDYWEQIEKNEIYKNEFNDGMIGYTTHILKFLKGKIDLSKFETVVDIGGSHGYLIGSLLDRYPNVNGINFDTDMVINSSNEKYQHPRLKHVAGDFFKSVPEADCYLMKLILRCFSDEKCCELLKIISKSMKSNAKIIILDIILDSSKYLNFDTYLDILMMETLDGKQRSLSEWIKLFEMSGFKIDKYESGSPNYLIISKE.

S-adenosyl-L-methionine-binding positions include Gly179, Asp202, 224 to 226 (GDF), Asp225, Phe226, and Lys239.

This sequence belongs to the class I-like SAM-binding methyltransferase superfamily. Cation-independent O-methyltransferase family. COMT subfamily.

The protein is Probable inactive O-methyltransferase 11 (omt11) of Dictyostelium discoideum (Social amoeba).